The chain runs to 379 residues: Methionine aminopeptidase 1 (379 aa).

The C6H2-type zinc-finger motif lies at 7–60; the sequence is KHICCGIDCNNEADRLQCPKCLNDGVKSYFCGQECFRNSWNIHKHLHRPPNVEK. Cys-10, Cys-15, Cys-24, Cys-27, Cys-37, Cys-41, His-49, and His-53 together coordinate Zn(2+). An a protein-binding site is contributed by His-192. Zn(2+) is bound by residues Asp-209, Asp-220, and His-289. His-296 is an a protein binding site. 2 residues coordinate Zn(2+): Glu-322 and Glu-353. Position 373 is a phosphoserine (Ser-373).

Belongs to the peptidase M24A family. Methionine aminopeptidase type 1 subfamily. In terms of assembly, associates with the 60S ribosomal subunit of the 80S translational complex. Requires Zn(2+) as cofactor. The cofactor is Co(2+). Mn(2+) serves as cofactor. It depends on Fe(2+) as a cofactor.

The protein localises to the cytoplasm. It localises to the nucleus. It is found in the nucleolus. The enzyme catalyses Release of N-terminal amino acids, preferentially methionine, from peptides and arylamides.. In terms of biological role, cotranslationally removes the N-terminal methionine from nascent proteins. The N-terminal methionine is often cleaved when the second residue in the primary sequence is small and uncharged (Met-Ala-, Cys, Gly, Pro, Ser, Thr, or Val). The polypeptide is Methionine aminopeptidase 1 (fma1) (Schizosaccharomyces pombe (strain 972 / ATCC 24843) (Fission yeast)).